Here is a 197-residue protein sequence, read N- to C-terminus: Scoloptoxin SSD20 (197 aa).

A signal peptide spans 1 to 6 (PPMTTE).

In terms of tissue distribution, expressed by the venom gland.

The protein localises to the secreted. Functionally, may act as a voltage-gated potassium channel inhibitor. Is highly similar to the subunit beta of SSD14 which, when complexed with subunit alpha, induces platelet aggregation and hemolysis. In Scolopendra dehaani (Thai centipede), this protein is Scoloptoxin SSD20.